The following is a 341-amino-acid chain: Zinc transporter 6, chloroplastic (341 aa).

Residues 28–48 (IVAVFAIFLTSVFGVWGPVLL) traverse the membrane as a helical segment. Over 49-61 (AKYFHGKPLYDKA) the chain is Cytoplasmic. A helical membrane pass occupies residues 62 to 82 (ILVIKCFAAGVILSTSLVHVL). Over 83-102 (PEAFESLADCQVSSRHPWKD) the chain is Lumenal. A helical membrane pass occupies residues 103 to 123 (FPFAGLVTMIGAITALLVDLT). Residues 124 to 179 (ASEHMGHGGGGGGDGGMEYMPVGKAVGGLEMKEGKCGADLEIQENSEEEIVKMKQR) are Cytoplasmic-facing. A helical membrane pass occupies residues 180-200 (LVSQVLEIGIIFHSVIIGVTM). At 201-211 (GMSQNKCTIRP) the chain is on the lumenal side. The chain crosses the membrane as a helical span at residues 212-232 (LIAALSFHQIFEGLGLGGCIA). Over 233–243 (QAGFKAGTVVY) the chain is Cytoplasmic. The helical transmembrane segment at 244-264 (MCLMFAVTTPLGIVLGMVIFA) threads the bilayer. The Lumenal portion of the chain corresponds to 265–280 (ATGYDDQNPNALIMEG). A helical membrane pass occupies residues 281–301 (LLGSFSSGILIYMALVDLIAL). At 302 to 320 (DFFHNKMLTTCGESGSRLK) the chain is on the cytoplasmic side. The chain crosses the membrane as a helical span at residues 321 to 341 (KLCFVALVLGSASMSLLALWA).

This sequence belongs to the ZIP transporter (TC 2.A.5) family.

The protein localises to the plastid. It is found in the chloroplast thylakoid membrane. May play a role in the transport of zinc in the plastids. This is Zinc transporter 6, chloroplastic (ZIP6) from Arabidopsis thaliana (Mouse-ear cress).